Consider the following 105-residue polypeptide: MTDRIHVQPAHLRQAAAHHQQTADYLRTVPSSHDAIRESLDSLGPIFSELRDTGRELLELRKQCYQQQADNHADIAQNLRTSAAMWEQHERAASRSLGNIIDGSR.

This is an uncharacterized protein from Mycobacterium bovis (strain ATCC BAA-935 / AF2122/97).